Reading from the N-terminus, the 88-residue chain is Small ribosomal subunit protein bS20 (88 aa).

A disordered region spans residues 1–27 (MANSKSAKKRALQSEKRRQHNASRRSM).

This sequence belongs to the bacterial ribosomal protein bS20 family.

In terms of biological role, binds directly to 16S ribosomal RNA. The protein is Small ribosomal subunit protein bS20 of Shewanella loihica (strain ATCC BAA-1088 / PV-4).